A 512-amino-acid chain; its full sequence is Cytochrome P450 monooxygenase gliC (512 aa).

The signal sequence occupies residues 1 to 19 (MAFTLTILVPCMVLALVAA). Residues Asn-118, Asn-421, and Asn-434 are each glycosylated (N-linked (GlcNAc...) asparagine). Cys-452 is a heme binding site.

It belongs to the cytochrome P450 family. It depends on heme as a cofactor.

The protein operates within mycotoxin biosynthesis. Cytochrome P450 monooxygenase; part of the gene cluster that mediates the biosynthesis of gliotoxin, a member of the epipolythiodioxopiperazine (ETP) class of toxins characterized by a disulfide bridged cyclic dipeptide. The first step in gliotoxin biosynthesis is the condensation of serine and phenylalanine to form the cyclo-L-phenylalanyl-L-serine diketopiperazine (DKP) by the NRPS gliP. GliP is also able to produce the DKP cyclo-L-tryptophanyl-L-serine, suggesting that the substrate specificity of the first adenylation (A) domain in gliP is sufficiently relaxed to accommodate both L-Phe and L-Trp. The cytochrome P450 monooxygenase gliC has been shown to catalyze the subsequent hydroxylation of the alpha-carbon of L-Phe in cyclo-L-phenylalanyl-L-serine whereas the second cytochrome P450 enzyme, gliF, is presumably involved in the modification of the DKP side chain. The glutathione S-transferase (GST) gliG then forms a bis-glutathionylated biosynthetic intermediate which is responsible for the sulfurization of gliotoxin. This bis-glutathionylated intermediate is subsequently processed by the gamma-glutamyl cyclotransferase gliK to remove both gamma-glutamyl moieties. Subsequent processing via gliI yields a biosynthetic intermediate, which is N-methylated via the N-methyltransferase gliN, before the gliotoxin oxidoreductase gliT-mediated disulfide bridge closure. GliN-mediated amide methylation confers stability to ETP, damping the spontaneous formation of tri- and tetrasulfides. Intracellular dithiol gliotoxin oxidized by gliT is subsequently effluxed by gliA. Gliotoxin contributes to pathogenesis during invasive aspergillosis. In macrophages and neutrophils, gliotoxin showed inhibition of various different cell functions including cytokine production, antigen presentation, phagocytosis, and production of reactive oxygen species. In Aspergillus fumigatus (strain ATCC MYA-4609 / CBS 101355 / FGSC A1100 / Af293) (Neosartorya fumigata), this protein is Cytochrome P450 monooxygenase gliC.